We begin with the raw amino-acid sequence, 76 residues long: RNA-binding protein KhpA (76 aa).

Residues serine 29–glutamate 76 enclose the KH domain.

This sequence belongs to the KhpA RNA-binding protein family. As to quaternary structure, forms a complex with KhpB.

It localises to the cytoplasm. Functionally, a probable RNA chaperone. Forms a complex with KhpB which binds to cellular RNA and controls its expression. Plays a role in peptidoglycan (PG) homeostasis and cell length regulation. The protein is RNA-binding protein KhpA of Listeria innocua serovar 6a (strain ATCC BAA-680 / CLIP 11262).